Here is a 190-residue protein sequence, read N- to C-terminus: Peptidyl-tRNA hydrolase (190 aa).

Tyrosine 18 contacts tRNA. Histidine 23 serves as the catalytic Proton acceptor. Residues phenylalanine 69, asparagine 71, and asparagine 117 each contribute to the tRNA site.

Belongs to the PTH family. As to quaternary structure, monomer.

The protein resides in the cytoplasm. It catalyses the reaction an N-acyl-L-alpha-aminoacyl-tRNA + H2O = an N-acyl-L-amino acid + a tRNA + H(+). Its function is as follows. Hydrolyzes ribosome-free peptidyl-tRNAs (with 1 or more amino acids incorporated), which drop off the ribosome during protein synthesis, or as a result of ribosome stalling. Functionally, catalyzes the release of premature peptidyl moieties from peptidyl-tRNA molecules trapped in stalled 50S ribosomal subunits, and thus maintains levels of free tRNAs and 50S ribosomes. This chain is Peptidyl-tRNA hydrolase, found in Rhodococcus jostii (strain RHA1).